We begin with the raw amino-acid sequence, 131 residues long: MSTISYTAVGRRKEATAKVKLQPGTGIITVNKKPGETYFNYNSEYLSTLRGPLLALGLENDYDLHITAKGGGIKGQTDAVKLGLARAICTMSSEKRESLKPHGYLTRDYRAKERKKYGLRKARKAPQFSKR.

This sequence belongs to the universal ribosomal protein uS9 family.

Its subcellular location is the plastid. It localises to the chloroplast. The polypeptide is Small ribosomal subunit protein uS9c (rps9) (Emiliania huxleyi (Coccolithophore)).